We begin with the raw amino-acid sequence, 717 residues long: Fatty acid oxidation complex subunit alpha (717 aa).

The segment at 1–190 (MIHAGNAITV…KDGAVDAVVS (190 aa)) is enoyl-CoA hydratase/isomerase. Asp-298 is a substrate binding site. Positions 313–717 (HPVNQAAVLG…MAENNKKFYG (405 aa)) are 3-hydroxyacyl-CoA dehydrogenase. NAD(+)-binding positions include Met-326, Asp-345, 402–404 (VTE), Lys-409, and Ser-431. The active-site For 3-hydroxyacyl-CoA dehydrogenase activity is the His-452. Asn-455 contributes to the NAD(+) binding site. Residue Asn-502 coordinates substrate.

It in the N-terminal section; belongs to the enoyl-CoA hydratase/isomerase family. In the C-terminal section; belongs to the 3-hydroxyacyl-CoA dehydrogenase family. As to quaternary structure, heterotetramer of two alpha chains (FadB) and two beta chains (FadA).

It carries out the reaction a (3S)-3-hydroxyacyl-CoA + NAD(+) = a 3-oxoacyl-CoA + NADH + H(+). The enzyme catalyses a (3S)-3-hydroxyacyl-CoA = a (2E)-enoyl-CoA + H2O. It catalyses the reaction a 4-saturated-(3S)-3-hydroxyacyl-CoA = a (3E)-enoyl-CoA + H2O. The catalysed reaction is (3S)-3-hydroxybutanoyl-CoA = (3R)-3-hydroxybutanoyl-CoA. It carries out the reaction a (3Z)-enoyl-CoA = a 4-saturated (2E)-enoyl-CoA. The enzyme catalyses a (3E)-enoyl-CoA = a 4-saturated (2E)-enoyl-CoA. It functions in the pathway lipid metabolism; fatty acid beta-oxidation. Involved in the aerobic and anaerobic degradation of long-chain fatty acids via beta-oxidation cycle. Catalyzes the formation of 3-oxoacyl-CoA from enoyl-CoA via L-3-hydroxyacyl-CoA. It can also use D-3-hydroxyacyl-CoA and cis-3-enoyl-CoA as substrate. This is Fatty acid oxidation complex subunit alpha from Acinetobacter baylyi (strain ATCC 33305 / BD413 / ADP1).